The chain runs to 219 residues: Small ribosomal subunit protein uS3 (219 aa).

One can recognise a KH type-2 domain in the interval 38–106 (IRKYINTKLA…KVHINIVEIK (69 aa)).

It belongs to the universal ribosomal protein uS3 family. As to quaternary structure, part of the 30S ribosomal subunit. Forms a tight complex with proteins S10 and S14.

Binds the lower part of the 30S subunit head. Binds mRNA in the 70S ribosome, positioning it for translation. In Latilactobacillus sakei subsp. sakei (strain 23K) (Lactobacillus sakei subsp. sakei), this protein is Small ribosomal subunit protein uS3.